Reading from the N-terminus, the 297-residue chain is Heme A synthase (297 aa).

The Cytoplasmic portion of the chain corresponds to 1–6 (MNRKLS). A helical transmembrane segment spans residues 7 to 27 (IFSAFVTFTMMIVLLMGGTVT). Topologically, residues 28–62 (KTDSGNGCGTDWPLCHGELIPTNPSVETMIEYSHR) are extracellular. The cysteines at positions 35 and 42 are disulfide-linked. Residue glutamate 58 is part of the active site. Histidine 61 is a heme o binding site. A helical membrane pass occupies residues 63–83 (AVTGVVGLLIIALCLWTLVAF). The Cytoplasmic segment spans residues 84–90 (KDRLDIK). The helical transmembrane segment at 91 to 111 (IFAFLAFIFMLIQSIVGAGAV) threads the bilayer. The Extracellular segment spans residues 112 to 121 (VWQQSDLVMA). Residues 122 to 142 (LHFGISLISFASLLILTILIM) traverse the membrane as a helical segment. A heme o-binding site is contributed by histidine 123. The Cytoplasmic segment spans residues 143 to 160 (ERSGQEFRESVPAFLRKL). Residues 161–181 (LYGLLIYTLIVVYTGAFVRHV) traverse the membrane as a helical segment. Over 182 to 201 (GATYACVGWPVCSQPTMTFE) the chain is Extracellular. The cysteines at positions 187 and 193 are disulfide-linked. A helical membrane pass occupies residues 202–222 (AWVQMIHRILAGLLFFYTLFV). A heme b-binding site is contributed by histidine 208. The Cytoplasmic segment spans residues 223 to 236 (HYTAIRLKHRTSRT). Residues 237–257 (GMLFATFFISCQVATGAWIVL) traverse the membrane as a helical segment. Residues 258–262 (GGHAT) are Extracellular-facing. A helical membrane pass occupies residues 263–283 (YVPLLHAFLITCYFGVISYLA). Heme b is bound at residue histidine 268. Topologically, residues 284–297 (YHAFRTRKKDSRLR) are cytoplasmic.

It belongs to the COX15/CtaA family. Type 1 subfamily. In terms of assembly, interacts with CtaB. The cofactor is heme b.

The protein localises to the cell membrane. It carries out the reaction Fe(II)-heme o + 2 A + H2O = Fe(II)-heme a + 2 AH2. Its pathway is porphyrin-containing compound metabolism; heme A biosynthesis; heme A from heme O: step 1/1. Its function is as follows. Catalyzes the conversion of heme O to heme A by two successive hydroxylations of the methyl group at C8. The first hydroxylation forms heme I, the second hydroxylation results in an unstable dihydroxymethyl group, which spontaneously dehydrates, resulting in the formyl group of heme A. This chain is Heme A synthase, found in Exiguobacterium sibiricum (strain DSM 17290 / CCUG 55495 / CIP 109462 / JCM 13490 / 255-15).